A 626-amino-acid polypeptide reads, in one-letter code: Membrane protein insertase YidC (626 aa).

A run of 5 helical transmembrane segments spans residues 8–28 (LILATGLSFVVILVWFLLFPP), 399–419 (MGLAIISLTLIVKAVLFPLAY), 469–489 (LPILLQIPIFFSLYKVIFVTL), 527–547 (SIMALIFIGILPLLLGISMWL), and 563–583 (IFAWLPWVFMFMLGSFASGLL).

It belongs to the OXA1/ALB3/YidC family. Type 1 subfamily. As to quaternary structure, interacts with the Sec translocase complex via SecD. Specifically interacts with transmembrane segments of nascent integral membrane proteins during membrane integration.

The protein resides in the cell inner membrane. Functionally, required for the insertion and/or proper folding and/or complex formation of integral membrane proteins into the membrane. Involved in integration of membrane proteins that insert both dependently and independently of the Sec translocase complex, as well as at least some lipoproteins. Aids folding of multispanning membrane proteins. This is Membrane protein insertase YidC from Jannaschia sp. (strain CCS1).